Reading from the N-terminus, the 398-residue chain is Elongation factor Tu (398 aa).

In terms of domain architecture, tr-type G spans 10–207; the sequence is KPHVNIGTIG…TVDEYIPEPE (198 aa). Residues 19 to 26 form a G1 region; that stretch reads GHVDHGKT. Residue 19 to 26 coordinates GTP; the sequence is GHVDHGKT. Thr26 contacts Mg(2+). Residues 63-67 are G2; the sequence is GITIN. The tract at residues 84–87 is G3; that stretch reads DAPG. GTP-binding positions include 84–88 and 139–142; these read DAPGH and NKVD. The segment at 139 to 142 is G4; the sequence is NKVD. The interval 177–179 is G5; that stretch reads SAL.

This sequence belongs to the TRAFAC class translation factor GTPase superfamily. Classic translation factor GTPase family. EF-Tu/EF-1A subfamily. Monomer.

The protein localises to the cytoplasm. The enzyme catalyses GTP + H2O = GDP + phosphate + H(+). Its function is as follows. GTP hydrolase that promotes the GTP-dependent binding of aminoacyl-tRNA to the A-site of ribosomes during protein biosynthesis. The polypeptide is Elongation factor Tu (Streptococcus agalactiae serotype V (strain ATCC BAA-611 / 2603 V/R)).